A 588-amino-acid polypeptide reads, in one-letter code: Proteasome-associated ATPase (588 aa).

Residues 1–10 (MAAHDDDMNR) are compositionally biased toward basic and acidic residues. The segment at 1–23 (MAAHDDDMNRGIRPGRGSDDPAG) is disordered. Residues 47-94 (RILEERIVELQTNLAGVSAQNERLANTLREARDQIVALKEEVDRLAQP) are a coiled coil. 276-281 (GCGKTL) lines the ATP pocket. A docks into pockets in the proteasome alpha-ring region spans residues 587 to 588 (YL).

It belongs to the AAA ATPase family. In terms of assembly, homohexamer. Assembles into a hexameric ring structure that caps the 20S proteasome core. Strongly interacts with the prokaryotic ubiquitin-like protein Pup through a hydrophobic interface; the interacting region of ARC lies in its N-terminal coiled-coil domain. There is one Pup binding site per ARC hexamer ring. Upon ATP-binding, the C-terminus of ARC interacts with the alpha-rings of the proteasome core, possibly by binding to the intersubunit pockets.

It functions in the pathway protein degradation; proteasomal Pup-dependent pathway. In terms of biological role, ATPase which is responsible for recognizing, binding, unfolding and translocation of pupylated proteins into the bacterial 20S proteasome core particle. May be essential for opening the gate of the 20S proteasome via an interaction with its C-terminus, thereby allowing substrate entry and access to the site of proteolysis. Thus, the C-termini of the proteasomal ATPase may function like a 'key in a lock' to induce gate opening and therefore regulate proteolysis. The chain is Proteasome-associated ATPase from Streptomyces avermitilis (strain ATCC 31267 / DSM 46492 / JCM 5070 / NBRC 14893 / NCIMB 12804 / NRRL 8165 / MA-4680).